The primary structure comprises 375 residues: 4,4'-diaponeurosporenoate glycosyltransferase (375 aa).

Transmembrane regions (helical) follow at residues 7 to 23 (LLHASTGLSLISGYLMY), 112 to 132 (ACYLGASYTVSDILIFMDADV), 280 to 300 (IMMLIILWMVGCITSFSGLAL), and 333 to 353 (FSILFLAINSILFLVFILVYI).

It belongs to the glycosyltransferase 2 family. CrtQ subfamily.

Its subcellular location is the cell membrane. It functions in the pathway carotenoid biosynthesis; staphyloxanthin biosynthesis; staphyloxanthin from farnesyl diphosphate: step 4/5. Functionally, catalyzes the glycosylation of 4,4'-diaponeurosporenoate, i.e. the esterification of glucose at the C1'' position with the carboxyl group of 4,4'-diaponeurosporenic acid, to form glycosyl-4,4'-diaponeurosporenoate. This is a step in the biosynthesis of staphyloxanthin, an orange pigment present in most staphylococci strains. This chain is 4,4'-diaponeurosporenoate glycosyltransferase (crtQ), found in Staphylococcus haemolyticus (strain JCSC1435).